The sequence spans 625 residues: DELLA protein SLR1 (625 aa).

Positions 1-34 (MKREYQEAGGSSGGGSSADMGSCKDKVMAGAAGE) are disordered. The DELLA motif signature appears at 39–43 (DELLA). The interval 167–208 (TADPSAADSARDTKRMRTGGGSTSSSSSSSSSLGGGASRGSV) is disordered. Residues 189 to 198 (TSSSSSSSSS) are compositionally biased toward low complexity. One can recognise a GRAS domain in the interval 232-621 (VDTQEAGIRL…RPLIATSAWR (390 aa)). The leucine repeat I (LRI) stretch occupies residues 239–294 (IRLVHALLACAEAVQQENFAAAEALVKQIPTLAASQGGAMRKVAAYFGEALARRVY). A required for possible homodimerization region spans residues 241–278 (LVHALLACAEAVQQENFAAAEALVKQIPTLAASQGGAM). The LxCxE motif signature appears at 246–250 (LACAE). Residues 313-378 (HAHFYESCPY…GGPPSFRLTG (66 aa)) form a VHIID region. The VHIID motif lies at 344-348 (VHVVD). Positions 392-431 (QVGWKLAQFAHTIRVDFQYRGLVAATLADLEPFMLQPEGE) are leucine repeat II (LRII). The segment at 441–542 (IAVNSVFELH…EVYLGRQICN (102 aa)) is PFYRE. The LXXLL motif signature appears at 449–453 (LHRLL). The tract at residues 545-621 (ACEGAERTER…RPLIATSAWR (77 aa)) is SAW.

Belongs to the GRAS family. DELLA subfamily.

In terms of biological role, probable transcriptional regulator that acts as a repressor of the gibberellin (GA) signaling pathway. Probably acts by participating in large multiprotein complexes that repress transcription of GA-inducible genes. Upon GA application, it is degraded by the proteasome, allowing the GA signaling pathway. In contrast, its overexpression prevents the GA signaling pathway and induces a dwarf phenotype. In Oryza sativa subsp. indica (Rice), this protein is DELLA protein SLR1.